The sequence spans 478 residues: Adenosylhomocysteinase (478 aa).

Positions 57, 139, and 201 each coordinate substrate. An NAD(+)-binding site is contributed by 202-204 (TTT). Lys231 and Asp235 together coordinate substrate. Residues Asn236, 265-270 (GYGDVG), Glu288, Asn323, 344-346 (IGH), and Asn392 each bind NAD(+).

The protein belongs to the adenosylhomocysteinase family. It depends on NAD(+) as a cofactor.

The protein resides in the cytoplasm. It carries out the reaction S-adenosyl-L-homocysteine + H2O = L-homocysteine + adenosine. It participates in amino-acid biosynthesis; L-homocysteine biosynthesis; L-homocysteine from S-adenosyl-L-homocysteine: step 1/1. May play a key role in the regulation of the intracellular concentration of adenosylhomocysteine. This is Adenosylhomocysteinase from Corynebacterium efficiens (strain DSM 44549 / YS-314 / AJ 12310 / JCM 11189 / NBRC 100395).